Reading from the N-terminus, the 550-residue chain is Warthog protein 8 (550 aa).

The first 19 residues, 1–19 (MNYLLLVSGLLSVWQPVFG), serve as a signal peptide directing secretion.

It belongs to the hedgehog family. Post-translationally, the C-terminal domain displays an autoproteolysis activity.

The protein resides in the secreted. The protein localises to the cell surface. Its subcellular location is the cell membrane. It localises to the extracellular space. Intercellular signal essential for a variety of patterning events during development. This is Warthog protein 8 (wrt-8) from Caenorhabditis elegans.